Consider the following 400-residue polypeptide: MGLFKVIFTAVAALSAVDAAELLSSAKSKDIIPNSYLVVMKDSVSSAELDSHVSWVTGLHREGIAKRGAENLGGFKHSYKINGWHAYSGSFDSETLASILDNDKVDFVEHDRHVYISGFVTQKDAPSWGLGRVSHRMNGTRDYVYDESAGSGITFYGVDTGIDIHHPDFGGRAVWGINVVNGTKDNDRHGHGTHTAATAAGTKYGLAKKANVVAVKALNDYGAGLWSNIMKALEWCVNDAREKKILGKAVLNLSISGGKVVAANQAITNAAKAGIFVSVAAGNDNQDATNKSPASAENVCCAAATTIRDDKAKFSNYGSVVKLYAPGQGITSATPNNQTGVMSGTSMAAPHIGGVGATLMASKGIAPSAVCAELIKMASGPVLNPGANTTNKLLYNGSGK.

The first 19 residues, 1-19 (MGLFKVIFTAVAALSAVDA), serve as a signal peptide directing secretion. Positions 20 to 117 (AELLSSAKSK…VEHDRHVYIS (98 aa)) are excised as a propeptide. In terms of domain architecture, Inhibitor I9 spans 35-116 (SYLVVMKDSV…FVEHDRHVYI (82 aa)). In terms of domain architecture, Peptidase S8 spans 127–400 (SWGLGRVSHR…NKLLYNGSGK (274 aa)). Asparagine 138 is a glycosylation site (N-linked (GlcNAc...) asparagine). Aspartate 159 acts as the Charge relay system in catalysis. N-linked (GlcNAc...) asparagine glycosylation occurs at asparagine 181. Histidine 191 acts as the Charge relay system in catalysis. Residues asparagine 252 and asparagine 337 are each glycosylated (N-linked (GlcNAc...) asparagine). Serine 346 (charge relay system) is an active-site residue. N-linked (GlcNAc...) asparagine glycosylation is found at asparagine 388 and asparagine 396.

It belongs to the peptidase S8 family.

The protein localises to the secreted. In terms of biological role, secreted subtilisin-like serine protease with keratinolytic activity that contributes to pathogenicity. The sequence is that of Subtilisin-like protease 11 (SUB11) from Arthroderma benhamiae (strain ATCC MYA-4681 / CBS 112371) (Trichophyton mentagrophytes).